A 232-amino-acid polypeptide reads, in one-letter code: RNA chaperone ProQ (232 aa).

The tract at residues 105–182 (EAKARVQAQR…REEQHTPVSD (78 aa)) is disordered. Basic and acidic residues predominate over residues 117–136 (QQAKKREAAAAAGEKEDAPR). Basic residues predominate over residues 137 to 146 (RERKPRPTTP). Over residues 147–177 (RRKEGAERKPRAQKSVEKAPKTVKAPREEQH) the composition is skewed to basic and acidic residues.

This sequence belongs to the ProQ family.

It localises to the cytoplasm. RNA chaperone with significant RNA binding, RNA strand exchange and RNA duplexing activities. May regulate ProP activity through an RNA-based, post-transcriptional mechanism. In Escherichia coli O7:K1 (strain IAI39 / ExPEC), this protein is RNA chaperone ProQ.